Consider the following 334-residue polypeptide: Putative peptide import ATP-binding protein BAB2_1053 (334 aa).

Positions 22 to 272 (VRTDDLVRDF…PLHPYSRALL (251 aa)) constitute an ABC transporter domain. Residue 64–71 (GESGSGKS) participates in ATP binding.

This sequence belongs to the ABC transporter superfamily. As to quaternary structure, the complex is composed of two ATP-binding proteins (BAB2_1052 and BAB2_1053), two transmembrane proteins (BAB2_1050 and BAB2_1051) and a solute-binding protein (BAB2_1049).

The protein localises to the cell inner membrane. Functionally, probably part of an ABC transporter complex that could be involved in peptide import. Probably responsible for energy coupling to the transport system. This Brucella abortus (strain 2308) protein is Putative peptide import ATP-binding protein BAB2_1053.